We begin with the raw amino-acid sequence, 358 residues long: 3-isopropylmalate dehydrogenase (358 aa).

Substrate contacts are provided by Arg-92, Arg-102, Arg-130, and Asp-224. Mg(2+)-binding residues include Asp-224, Asp-248, and Asp-252. NAD(+) is bound at residue 282–294 (GSAPDIAGQGIAN).

Belongs to the isocitrate and isopropylmalate dehydrogenases family. LeuB type 1 subfamily. Homodimer. The cofactor is Mg(2+). Mn(2+) is required as a cofactor.

The protein resides in the cytoplasm. It catalyses the reaction (2R,3S)-3-isopropylmalate + NAD(+) = 4-methyl-2-oxopentanoate + CO2 + NADH. The protein operates within amino-acid biosynthesis; L-leucine biosynthesis; L-leucine from 3-methyl-2-oxobutanoate: step 3/4. Catalyzes the oxidation of 3-carboxy-2-hydroxy-4-methylpentanoate (3-isopropylmalate) to 3-carboxy-4-methyl-2-oxopentanoate. The product decarboxylates to 4-methyl-2 oxopentanoate. This is 3-isopropylmalate dehydrogenase from Bordetella pertussis (strain Tohama I / ATCC BAA-589 / NCTC 13251).